The chain runs to 367 residues: MYLEVSERQVLDASDIAFLLENSTSPYDYGENESDFSDSPPCPQDFSLNFDRTFLPVLYSLLFLLGLLGNGAVAAVLLSQRTALSSTDTFLLHLAVADVLLVLTLPLWAVDAAAQWVFGSGLCKVAGALFNINFYAGAFLLACISFDRYLSIVHATQIYRRDPWVRVALTCIVVWGLCVLFALPDFIFLSASHDQRLNATHCQYNFPQVGRTALRVLQLVAGFLMPLLVMAYCYAHILAVLLVSRGQRRFRAMRLVVVVVVAFAVCWTPYHLVVLVDILMDVGVLARNCGRESHVDVAKSVTSGMGYMHCCLNPLLYAFVGVKFKEQMWMLLMRLGRSDQRGPQRQPSSSRRESSWSETTEASYLGL.

Residues 1-56 lie on the Extracellular side of the membrane; that stretch reads MYLEVSERQVLDASDIAFLLENSTSPYDYGENESDFSDSPPCPQDFSLNFDRTFLP. N-linked (GlcNAc...) asparagine glycosylation is present at N22. Sulfotyrosine occurs at positions 27 and 29. Residue N32 is glycosylated (N-linked (GlcNAc...) asparagine). Residues 57 to 77 form a helical membrane-spanning segment; that stretch reads VLYSLLFLLGLLGNGAVAAVL. Over 78–89 the chain is Cytoplasmic; the sequence is LSQRTALSSTDT. Residues 90 to 110 traverse the membrane as a helical segment; sequence FLLHLAVADVLLVLTLPLWAV. The Extracellular portion of the chain corresponds to 111 to 125; the sequence is DAAAQWVFGSGLCKV. A disulfide bond links C123 and C202. A helical transmembrane segment spans residues 126-146; it reads AGALFNINFYAGAFLLACISF. Over 147–168 the chain is Cytoplasmic; sequence DRYLSIVHATQIYRRDPWVRVA. Residues 169-189 form a helical membrane-spanning segment; sequence LTCIVVWGLCVLFALPDFIFL. Over 190–222 the chain is Extracellular; the sequence is SASHDQRLNATHCQYNFPQVGRTALRVLQLVAG. A glycan (N-linked (GlcNAc...) asparagine) is linked at N198. Residues 223–243 form a helical membrane-spanning segment; that stretch reads FLMPLLVMAYCYAHILAVLLV. Residues 244–255 lie on the Cytoplasmic side of the membrane; it reads SRGQRRFRAMRL. A helical transmembrane segment spans residues 256-276; sequence VVVVVVAFAVCWTPYHLVVLV. Over 277 to 300 the chain is Extracellular; sequence DILMDVGVLARNCGRESHVDVAKS. Residues 301-321 traverse the membrane as a helical segment; it reads VTSGMGYMHCCLNPLLYAFVG. Topologically, residues 322–367 are cytoplasmic; that stretch reads VKFKEQMWMLLMRLGRSDQRGPQRQPSSSRRESSWSETTEASYLGL. Residues 339 to 367 are disordered; that stretch reads DQRGPQRQPSSSRRESSWSETTEASYLGL.

Belongs to the G-protein coupled receptor 1 family. Homomer. Forms heteromers with ACKR4. Interacts with PF4/CXCL4. In terms of processing, sulfation on Tyr-27 and Tyr-29 is essential for CXCL10 binding. N-glycosylated.

It localises to the cell membrane. In terms of biological role, receptor for the C-X-C chemokine CXCL9, CXCL10 and CXCL11 and mediates the proliferation, survival and angiogenic activity of mesangial cells through a heterotrimeric G-protein signaling pathway. Probably promotes cell chemotaxis response. Binds to CCL21. Upon activation by PF4, induces activated T-lymphocytes migration mediated via downstream Ras/extracellular signal-regulated kinase (ERK) signaling. The polypeptide is C-X-C chemokine receptor type 3 (Cxcr3) (Rattus norvegicus (Rat)).